Reading from the N-terminus, the 364-residue chain is UDP-N-acetylglucosamine--N-acetylmuramyl-(pentapeptide) pyrophosphoryl-undecaprenol N-acetylglucosamine transferase (364 aa).

UDP-N-acetyl-alpha-D-glucosamine-binding positions include 15–17 (TGG), Asn-123, Arg-164, Ser-191, and Gln-286.

Belongs to the glycosyltransferase 28 family. MurG subfamily.

It is found in the cell inner membrane. The catalysed reaction is di-trans,octa-cis-undecaprenyl diphospho-N-acetyl-alpha-D-muramoyl-L-alanyl-D-glutamyl-meso-2,6-diaminopimeloyl-D-alanyl-D-alanine + UDP-N-acetyl-alpha-D-glucosamine = di-trans,octa-cis-undecaprenyl diphospho-[N-acetyl-alpha-D-glucosaminyl-(1-&gt;4)]-N-acetyl-alpha-D-muramoyl-L-alanyl-D-glutamyl-meso-2,6-diaminopimeloyl-D-alanyl-D-alanine + UDP + H(+). It participates in cell wall biogenesis; peptidoglycan biosynthesis. Cell wall formation. Catalyzes the transfer of a GlcNAc subunit on undecaprenyl-pyrophosphoryl-MurNAc-pentapeptide (lipid intermediate I) to form undecaprenyl-pyrophosphoryl-MurNAc-(pentapeptide)GlcNAc (lipid intermediate II). This Prochlorococcus marinus subsp. pastoris (strain CCMP1986 / NIES-2087 / MED4) protein is UDP-N-acetylglucosamine--N-acetylmuramyl-(pentapeptide) pyrophosphoryl-undecaprenol N-acetylglucosamine transferase.